Reading from the N-terminus, the 109-residue chain is Class I hydrophobin 7 (109 aa).

A signal peptide spans 1–17; the sequence is MFAQSFIITALAALAVA. 4 disulfide bridges follow: cysteine 28-cysteine 88, cysteine 35-cysteine 82, cysteine 36-cysteine 69, and cysteine 89-cysteine 102.

Belongs to the fungal hydrophobin family. In terms of assembly, self-assembles to form functional amyloid fibrils called rodlets. Self-assembly into fibrillar rodlets occurs spontaneously at hydrophobic:hydrophilic interfaces and the rodlets further associate laterally to form amphipathic monolayers.

It is found in the secreted. The protein localises to the cell wall. In terms of biological role, aerial growth, conidiation, and dispersal of filamentous fungi in the environment rely upon a capability of their secreting small amphipathic proteins called hydrophobins (HPBs) with low sequence identity. Class I can self-assemble into an outermost layer of rodlet bundles on aerial cell surfaces, conferring cellular hydrophobicity that supports fungal growth, development and dispersal; whereas Class II form highly ordered films at water-air interfaces through intermolecular interactions but contribute nothing to the rodlet structure. Hydph7 is a class I hydrophobin involved in fruiting body development. This chain is Class I hydrophobin 7, found in Pleurotus ostreatus (strain PC15) (Oyster mushroom).